A 359-amino-acid chain; its full sequence is DNA polymerase IV (359 aa).

The UmuC domain maps to 4 to 185; sequence IIHIDMDCYF…LSLRKIPGVG (182 aa). Positions 8 and 103 each coordinate Mg(2+). Glu-104 is a catalytic residue.

This sequence belongs to the DNA polymerase type-Y family. In terms of assembly, monomer. Mg(2+) serves as cofactor.

The protein localises to the cytoplasm. It carries out the reaction DNA(n) + a 2'-deoxyribonucleoside 5'-triphosphate = DNA(n+1) + diphosphate. In terms of biological role, poorly processive, error-prone DNA polymerase involved in untargeted mutagenesis. Copies undamaged DNA at stalled replication forks, which arise in vivo from mismatched or misaligned primer ends. These misaligned primers can be extended by PolIV. Exhibits no 3'-5' exonuclease (proofreading) activity. May be involved in translesional synthesis, in conjunction with the beta clamp from PolIII. This chain is DNA polymerase IV, found in Shewanella sp. (strain ANA-3).